Reading from the N-terminus, the 372-residue chain is L-selectin (372 aa).

The first 28 residues, 1 to 28, serve as a signal peptide directing secretion; the sequence is MIFPWKCQSTQRDLCNIFKLWGWTMLCC. Residues 29–38 constitute a propeptide that is removed on maturation; it reads DFLAHHGTDC. Topologically, residues 39–332 are extracellular; the sequence is WTYHYSEKPM…FSMIKEGDYN (294 aa). The 101-residue stretch at 55–155 folds into the C-type lectin domain; the sequence is RFCRENYTDL…ACHKLKAALC (101 aa). Intrachain disulfides connect C57–C155, C128–C147, C128–C160, C160–C171, C165–C180, C182–C191, C197–C241, C227–C254, C259–C303, and C289–C316. N60 and N104 each carry an N-linked (GlcNAc...) asparagine glycan. The Ca(2+) site is built by E118, N120, E126, N143, and D144. The EGF-like domain maps to 156–192; it reads YTASCQPWSCSGHGECVEIINNYTCNCDVGYYGPQCQ. The N-linked (GlcNAc...) asparagine glycan is linked to N177. 2 Sushi domains span residues 195-256 and 257-318; these read IQCE…TCQV and IQCE…ICQK. Residues N216, N226, N232, N246, and N271 are each glycosylated (N-linked (GlcNAc...) asparagine). Residues 333-355 traverse the membrane as a helical segment; that stretch reads PLFIPVAVMVTAFSGLAFIIWLA. Residues 356–372 lie on the Cytoplasmic side of the membrane; it reads RRLKKGKKSKKSMDDPY.

Belongs to the selectin/LECAM family. As to quaternary structure, interaction with SELPLG/PSGL1 and PODXL2 is required for promoting recruitment and rolling of leukocytes. This interaction is dependent on the sialyl Lewis X glycan modification of SELPLG and PODXL2, and tyrosine sulfation modifications of SELPLG. Sulfation on 'Tyr-51' of SELPLG is important for L-selectin binding. In terms of processing, N-glycosylated.

The protein localises to the cell membrane. Functionally, calcium-dependent lectin that mediates cell adhesion by binding to glycoproteins on neighboring cells. Mediates the adherence of lymphocytes to endothelial cells of high endothelial venules in peripheral lymph nodes. Promotes initial tethering and rolling of leukocytes in endothelia. The polypeptide is L-selectin (SELL) (Pongo pygmaeus (Bornean orangutan)).